The primary structure comprises 194 residues: A-type ATP synthase subunit E (194 aa).

The protein belongs to the V-ATPase E subunit family. In terms of assembly, has multiple subunits with at least A(3), B(3), C, D, E, F, H, I and proteolipid K(x).

Its subcellular location is the cell membrane. Its function is as follows. Component of the A-type ATP synthase that produces ATP from ADP in the presence of a proton gradient across the membrane. This chain is A-type ATP synthase subunit E, found in Haloferax volcanii (strain ATCC 29605 / DSM 3757 / JCM 8879 / NBRC 14742 / NCIMB 2012 / VKM B-1768 / DS2) (Halobacterium volcanii).